We begin with the raw amino-acid sequence, 551 residues long: Arginine--tRNA ligase (551 aa).

The 'HIGH' region motif lies at 123–133 (ANPTGPLTIGR).

Belongs to the class-I aminoacyl-tRNA synthetase family. In terms of assembly, monomer.

It is found in the cytoplasm. The catalysed reaction is tRNA(Arg) + L-arginine + ATP = L-arginyl-tRNA(Arg) + AMP + diphosphate. The protein is Arginine--tRNA ligase of Chlorobaculum tepidum (strain ATCC 49652 / DSM 12025 / NBRC 103806 / TLS) (Chlorobium tepidum).